Here is a 161-residue protein sequence, read N- to C-terminus: Protein-export protein SecB (161 aa).

It belongs to the SecB family. Homotetramer, a dimer of dimers. One homotetramer interacts with 1 SecA dimer.

The protein resides in the cytoplasm. Its function is as follows. One of the proteins required for the normal export of preproteins out of the cell cytoplasm. It is a molecular chaperone that binds to a subset of precursor proteins, maintaining them in a translocation-competent state. It also specifically binds to its receptor SecA. The chain is Protein-export protein SecB from Shewanella putrefaciens (strain CN-32 / ATCC BAA-453).